Here is a 309-residue protein sequence, read N- to C-terminus: Porphobilinogen deaminase (309 aa).

Cys-243 is modified (S-(dipyrrolylmethanemethyl)cysteine).

It belongs to the HMBS family. In terms of assembly, monomer. Dipyrromethane serves as cofactor.

It catalyses the reaction 4 porphobilinogen + H2O = hydroxymethylbilane + 4 NH4(+). Its pathway is porphyrin-containing compound metabolism; protoporphyrin-IX biosynthesis; coproporphyrinogen-III from 5-aminolevulinate: step 2/4. Its function is as follows. Tetrapolymerization of the monopyrrole PBG into the hydroxymethylbilane pre-uroporphyrinogen in several discrete steps. In Deinococcus geothermalis (strain DSM 11300 / CIP 105573 / AG-3a), this protein is Porphobilinogen deaminase.